We begin with the raw amino-acid sequence, 141 residues long: Large ribosomal subunit protein uL11 (141 aa).

The protein belongs to the universal ribosomal protein uL11 family. Part of the ribosomal stalk of the 50S ribosomal subunit. Interacts with L10 and the large rRNA to form the base of the stalk. L10 forms an elongated spine to which L12 dimers bind in a sequential fashion forming a multimeric L10(L12)X complex. Post-translationally, one or more lysine residues are methylated.

Its function is as follows. Forms part of the ribosomal stalk which helps the ribosome interact with GTP-bound translation factors. This chain is Large ribosomal subunit protein uL11, found in Streptococcus pneumoniae serotype 2 (strain D39 / NCTC 7466).